Reading from the N-terminus, the 342-residue chain is MQVYSLQELAQQIGATIRGNADVVVESIAPLDKATEKQLTFISNPKFRSLLAQSHAGILVVSEADVAFCAEQSNLLIVKDPYVAYAVLAQYMDSTPKAASGIAASAVVSASAVIGKNVSIGANAVIEDGVTLGDHVVIGANCFVGKNSKIGAYTQLWANVSVYHEVEIGQHCLIQSGAVIGSDGFGYANDRGRWIKIPQVGQVIIGNHVEIGACTCIDRGALDPTVIEDNVIIDNLCQIAHNVHIGTGTAVAGGVIMAGSLTVGRYCLIGGASVINGHMEICDKVTITGMGMVMRPITEPGVYSSGIPLQTNKEWRKTAALTLGIDAMNKRLKALEKKFEKK.

The Proton acceptor role is filled by H241.

Belongs to the transferase hexapeptide repeat family. LpxD subfamily. In terms of assembly, homotrimer.

The enzyme catalyses a UDP-3-O-[(3R)-3-hydroxyacyl]-alpha-D-glucosamine + a (3R)-hydroxyacyl-[ACP] = a UDP-2-N,3-O-bis[(3R)-3-hydroxyacyl]-alpha-D-glucosamine + holo-[ACP] + H(+). It participates in bacterial outer membrane biogenesis; LPS lipid A biosynthesis. Its function is as follows. Catalyzes the N-acylation of UDP-3-O-acylglucosamine using 3-hydroxyacyl-ACP as the acyl donor. Is involved in the biosynthesis of lipid A, a phosphorylated glycolipid that anchors the lipopolysaccharide to the outer membrane of the cell. The chain is UDP-3-O-acylglucosamine N-acyltransferase from Pasteurella multocida (strain Pm70).